The sequence spans 494 residues: Neuronal acetylcholine receptor subunit alpha-6 (494 aa).

The N-terminal stretch at 1 to 31 (MHPKRRLCWCLPASGAWAFMLTSLIADTTAC) is a signal peptide. Residues 32 to 240 (ESEERLFHKL…TYSFYIRRLP (209 aa)) are Extracellular-facing. N-linked (GlcNAc...) asparagine glycosylation is found at Asn54 and Asn171. Residues Cys158 and Cys172 are joined by a disulfide bond. 3 helical membrane-spanning segments follow: residues 241-265 (MFYT…FYLP), 272-290 (VTLC…LVIT), and 306-327 (YLLF…VLNI). At 328 to 468 (HYRTPTTHTM…WKYVAMVIDR (141 aa)) the chain is on the cytoplasmic side. The disordered stretch occupies residues 364–390 (KNISKKTKKGSAKTSGKSKHSKHKDNK). A compositionally biased stretch (basic residues) spans 366–390 (ISKKTKKGSAKTSGKSKHSKHKDNK). The helical transmembrane segment at 469–489 (VFLWVFIILCVFGTAGLFIQP) threads the bilayer.

This sequence belongs to the ligand-gated ion channel (TC 1.A.9) family. Acetylcholine receptor (TC 1.A.9.1) subfamily. Alpha-6/CHRNA6 sub-subfamily. Neuronal AChR is composed of two different types of subunits: alpha and non-alpha (beta). CHRNA6/alpha-6 subunit can be combined to CHRNB2/beta-2, CHRNA4/alpha-4 and CHRNB3/beta-3 to give rise to functional receptors. Heteropentamers containing CHRNB3 have an stoichiometry of (CHRNA6:CHRNB2)2:CHRNB3. Interacts with LYPD6.

It localises to the synaptic cell membrane. It carries out the reaction K(+)(in) = K(+)(out). The enzyme catalyses Na(+)(in) = Na(+)(out). It catalyses the reaction Ca(2+)(in) = Ca(2+)(out). Its activity is regulated as follows. Activated by a myriad of ligands such as acetylcholine, cytisine and nicotine. CHRNA6 nAChR activity is inhibited by the antagonists alpha-conotoxin MII and PIA, a small disulfide-constrained peptides from cone snails. In terms of biological role, component of neuronal acetylcholine receptors (nAChRs) that function as pentameric, ligand-gated cation channels with high calcium permeability among other activities. nAChRs are excitatory neurotrasnmitter receptors formed by a collection of nAChR subunits known to mediate synaptic transmission in the nervous system and the neuromuscular junction. Each nAchR subunit confers differential attributes to channel properties, including activation, deactivation and desensitization kinetics, pH sensitivity, cation permeability, and binding to allosteric modulators. CHRNA6 forms pentameric channels with CHRNB2 and CHRNA4 that exhibit high sensitivity to ACh and nicotine and are predominantly expressed in only a few brain areas, including dopaminergic neurons, norepirephrine neurons and cells of the visual system. nAChrs containing CHRNA6 subunits mediate endogenous cholinergic modulation of dopamine and gamma-aminobutyric acid (GABA) release in response to nicotine at nerve terminals. Its function is as follows. Component of neuronal acetylcholine receptors (nAChRs) that function as pentameric, ligand-gated cation channels with high calcium permeability among other activities. nAChRs are excitatory neurotrasnmitter receptors formed by a collection of nAChR subunits known to mediate synaptic transmission in the nervous system and the neuromuscular junction. Each nAchR subunit confers differential attributes to channel properties, including activation, deactivation and desensitization kinetics, pH sensitivity, cation permeability, and binding to allosteric modulators. CHRNA6 forms pentameric channels with CHRNB2, CHRNB3 and CHRNA4 that exhibit high sensitivity to ACh and nicotine and are predominantly expressed in only a few brain areas, including dopaminergic neurons, norepirephrine neurons and cells of the visual system. nAChrs containing CHRNA6 subunits mediate endogenous cholinergic modulation of dopamine and gamma-aminobutyric acid (GABA) release in response to nicotine at nerve terminals. In Gallus gallus (Chicken), this protein is Neuronal acetylcholine receptor subunit alpha-6 (CHRNA6).